The primary structure comprises 559 residues: Protein pp71 (559 aa).

S-nitrosocysteine; by host is present on cysteine 218. A Phosphothreonine modification is found at threonine 223. 2 disordered regions span residues 404 to 440 (EFLPQSPGLPPTEEEEEEEEEDDEDDLSSTPTPTPLS) and 530 to 559 (SSTLRSVPAPRPSPISTASTSSTPRSRPRI). The segment covering 415-430 (TEEEEEEEEEDDEDDL) has biased composition (acidic residues). Low complexity-rich tracts occupy residues 431–440 (SSTPTPTPLS) and 543–559 (PISTASTSSTPRSRPRI).

It belongs to the herpesviridae pp71 family. As to quaternary structure, interacts with the host protein DAXX; this interaction takes place at ND10 and induces the reversal of DAXX-mediated repression of viral transcription. Interacts with UL35. Interacts with host TMEM173/STING1; this interaction inhibits the cGAS/STING pathway. Interacts with host RB1; this interaction mediates RB1 proteasomal degradation. In terms of processing, S-nitrosylation limits ability to undermine the cGAS/STING antiviral pathway.

Its subcellular location is the virion tegument. The protein localises to the host nucleus. It localises to the host endoplasmic reticulum. Stimulates viral immediate-early (IE) transcription. Plays a role in the inhibition of the host innate repsonse by targeting STING1 and thus the cGAS-STING pathway. Also counteracts host DAXX-mediated repression of viral transcription. Displaces a DAXX-binding protein, ATRX, from nuclear domain 10 sites (ND10) shortly after infection. Increases the basal level of SUMOylated DAXX in infected cells. Stimulates quiescent cells to re-enter the cell cycle, proceed through G1 and enter the S phase. Interacts with hypophosphorylated forms of RB1 and induces their degradation by the proteasome without involving ubiquitin conjugation. The protein is Protein pp71 (UL82) of Human cytomegalovirus (strain AD169) (HHV-5).